The primary structure comprises 453 residues: Allantoinase (453 aa).

Zn(2+) is bound by residues H59, H61, K146, H186, H242, and D315. At K146 the chain carries N6-carboxylysine.

The protein belongs to the metallo-dependent hydrolases superfamily. Allantoinase family. As to quaternary structure, homotetramer. Requires Zn(2+) as cofactor. Carboxylation allows a single lysine to coordinate two zinc ions.

It carries out the reaction (S)-allantoin + H2O = allantoate + H(+). The protein operates within nitrogen metabolism; (S)-allantoin degradation; allantoate from (S)-allantoin: step 1/1. Its function is as follows. Catalyzes the conversion of allantoin (5-ureidohydantoin) to allantoic acid by hydrolytic cleavage of the five-member hydantoin ring. In Escherichia coli (strain 55989 / EAEC), this protein is Allantoinase.